Here is a 101-residue protein sequence, read N- to C-terminus: Small ribosomal subunit protein uS14 (101 aa).

The segment at 1–20 (MAKTSAVEKNKRRRKLVANH) is disordered. Residues 10–20 (NKRRRKLVANH) are compositionally biased toward basic residues.

Belongs to the universal ribosomal protein uS14 family. In terms of assembly, part of the 30S ribosomal subunit. Contacts proteins S3 and S10.

Binds 16S rRNA, required for the assembly of 30S particles and may also be responsible for determining the conformation of the 16S rRNA at the A site. The chain is Small ribosomal subunit protein uS14 from Sinorhizobium medicae (strain WSM419) (Ensifer medicae).